Here is an 80-residue protein sequence, read N- to C-terminus: Raniseptin-5 (80 aa).

The signal sequence occupies residues 1 to 22 (MAFLKKSLFLVLFLGIVSLSIC). A propeptide spanning residues 23–49 (EEEKREGEEEEKQEEENEELSEEELRE) is cleaved from the precursor.

It belongs to the frog skin active peptide (FSAP) family. Dermaseptin subfamily. Expressed by the skin glands.

It localises to the secreted. Has antibacterial activity. In Boana raniceps (Chaco tree frog), this protein is Raniseptin-5.